The primary structure comprises 382 residues: Neuropeptide Y receptor type 1 (382 aa).

Topologically, residues 1 to 33 (MNSTLFSRVENYSVHYNVSENSPFLAFENDDCH) are extracellular. Residues asparagine 2, asparagine 11, and asparagine 17 are each glycosylated (N-linked (GlcNAc...) asparagine). Residues 34 to 54 (LPLAVIFTLALAYGAVIILGV) traverse the membrane as a helical segment. Topologically, residues 55–75 (SGNLALIIIILKQKEMRNVTN) are cytoplasmic. A helical transmembrane segment spans residues 76–96 (ILIVNLSFSDLLVAVMCLPFT). The Extracellular segment spans residues 97 to 115 (FVYTLMDHWVFGETMCKLN). Cysteine 112 and cysteine 197 are disulfide-bonded. A helical membrane pass occupies residues 116–136 (PFVQCVSITVSIFSLVLIAVE). Over 137–153 (RHQLIINPRGWRPNNRH) the chain is Cytoplasmic. The chain crosses the membrane as a helical span at residues 154 to 174 (AYIGITVIWVLAVASSLPFVI). Over 175–210 (YQILTDEPFQNVSLAAFKDKYVCFDKFPSDSHRLSY) the chain is Extracellular. The chain crosses the membrane as a helical span at residues 211 to 231 (TTLLLVLQYFGPLCFIFICYF). Over 232–259 (KIYIRLKRRNNMMDKIRDSKYRSSETKR) the chain is Cytoplasmic. Residues 260 to 280 (INVMLLSIVVAFAVCWLPLTI) form a helical membrane-spanning segment. Residues 281–298 (FNTVFDWNHQIIATCNHN) are Extracellular-facing. Residues 299–319 (LLFLLCHLTAMISTCVNPIFY) form a helical membrane-spanning segment. Over 320 to 382 (GFLNKNFQRD…KISMNDNEKI (63 aa)) the chain is Cytoplasmic. Residue cysteine 337 is the site of S-palmitoyl cysteine attachment. 2 positions are modified to phosphoserine: serine 367 and serine 375.

This sequence belongs to the G-protein coupled receptor 1 family. Brain.

The protein localises to the cell membrane. In terms of biological role, receptor for neuropeptide Y and peptide YY. The sequence is that of Neuropeptide Y receptor type 1 (Npy1r) from Rattus norvegicus (Rat).